Here is a 239-residue protein sequence, read N- to C-terminus: Calcium load-activated calcium channel (239 aa).

At 1–55 (MPRKRKCDLRAVRVGLLLGGGGVYGSRFRFTFPGCRALSPWRVRVQRRRCEMSTM) the chain is on the lumenal side. Residues 56-83 (FADTLLIVFISVCTALLAEGITWVLVYR) traverse the membrane as a helical segment. Residues 83 to 140 (RTDKYKRLKAEVEKQSKKLEKKKETITESAGRQQKKKIERQEEKLKNNNRDLSMVRMK) adopt a coiled-coil conformation. Residues 84-137 (TDKYKRLKAEVEKQSKKLEKKKETITESAGRQQKKKIERQEEKLKNNNRDLSMV) are Cytoplasmic-facing. The residue at position 111 (Ser-111) is a Phosphoserine. Residues 138 to 157 (RMKSMFAIGFCFTALMGMFN) traverse the membrane as a helical segment. At 158–171 (SIFDGRVVAKLPFT) the chain is on the lumenal side. An intramembrane segment occupies 172–181 (PLSYIQGLSH). Residues 182–191 (RNLLGDDTTD) are Lumenal-facing. A helical membrane pass occupies residues 192–213 (CSFIFLYILCTMSIRQNIQKIL). Residues 214–239 (GLAPSRAATKQAGGFLGPPPPSGKFS) lie on the Cytoplasmic side of the membrane. Residue Ser-239 is modified to Phosphoserine.

The protein belongs to the TMCO1 family. As to quaternary structure, homodimer and homotetramer. Homodimer under resting conditions; forms homotetramers following ER calcium overload. Component of the GET- and EMC-like (GEL) complex, composed of RAB5IF/OPTI and TMCO1. The GEL complex is part of the multi-pass translocon (MPT) complex, composed of three subcomplexes, the GEL complex (composed of RAB5IF/OPTI and TMCO1), the BOS complex (composed of NCLN/Nicalin, NOMO and TMEM147) and the PAT complex (composed of WDR83OS/Asterix and CCDC47). The MPT complex associates with the SEC61 complex. As to expression, widely expressed in adult and fetal tissues, with higher levels in thymus, prostate, testis and small intestine and lower levels in brain, placenta, lung and kidney. Present in most tissues in the eye, including the trabecular meshwork and retina (at protein level).

The protein resides in the endoplasmic reticulum membrane. The protein localises to the golgi apparatus membrane. It is found in the mitochondrion membrane. It carries out the reaction Ca(2+)(in) = Ca(2+)(out). Functionally, endoplasmic reticulum (ER) calcium-selective channel preventing intracellular Ca2(+) stores from overfilling and maintaining calcium homeostasis in the ER. In response to endoplasmic reticulum (ER) Ca2(+) overloading, assembles into a homotetramer, forming a functional calcium-selective channel facilitating Ca2(+) release. Mediates ER Ca2(+) homeostasis in osteoblasts and plays a key role in bone formation, via the CaMKII-HDAC4-RUNX2 signaling axis. Component of the multi-pass translocon (MPT) complex that mediates insertion of multi-pass membrane proteins into the lipid bilayer of membranes. The MPT complex takes over after the SEC61 complex: following membrane insertion of the first few transmembrane segments of proteins by the SEC61 complex, the MPT complex occludes the lateral gate of the SEC61 complex to promote insertion of subsequent transmembrane regions. Within the MPT complex, the GEL subcomplex may mediate insertion of transmembrane regions into the membrane. This chain is Calcium load-activated calcium channel, found in Homo sapiens (Human).